The sequence spans 523 residues: 2-isopropylmalate synthase (523 aa).

Residues V5–W267 form the Pyruvate carboxyltransferase domain. Residues D14, H202, H204, and N238 each contribute to the Mn(2+) site. Positions R392–V523 are regulatory domain.

Belongs to the alpha-IPM synthase/homocitrate synthase family. LeuA type 1 subfamily. In terms of assembly, homodimer. The cofactor is Mn(2+).

It is found in the cytoplasm. It catalyses the reaction 3-methyl-2-oxobutanoate + acetyl-CoA + H2O = (2S)-2-isopropylmalate + CoA + H(+). It participates in amino-acid biosynthesis; L-leucine biosynthesis; L-leucine from 3-methyl-2-oxobutanoate: step 1/4. In terms of biological role, catalyzes the condensation of the acetyl group of acetyl-CoA with 3-methyl-2-oxobutanoate (2-ketoisovalerate) to form 3-carboxy-3-hydroxy-4-methylpentanoate (2-isopropylmalate). The protein is 2-isopropylmalate synthase of Salmonella choleraesuis (strain SC-B67).